We begin with the raw amino-acid sequence, 624 residues long: Probable potassium transport system protein Kup (624 aa).

Transmembrane regions (helical) follow at residues 13–33 (LALG…LYTM), 52–72 (ILSL…VLVI), 102–122 (WIIM…SLIT), 139–159 (PALH…LFAI), 170–190 (LFGP…AIGI), 208–228 (FFMT…LAIT), 249–269 (WFGF…ALLL), 291–311 (MVAL…SGAF), 339–359 (IYIP…VLGF), 368–388 (AYGI…ALLM), 399–419 (TLVA…ANAV), and 421–441 (IPEG…ILVT).

The protein belongs to the HAK/KUP transporter (TC 2.A.72) family.

The protein localises to the cell inner membrane. It carries out the reaction K(+)(in) + H(+)(in) = K(+)(out) + H(+)(out). Functionally, transport of potassium into the cell. Likely operates as a K(+):H(+) symporter. This Thiobacillus denitrificans (strain ATCC 25259 / T1) protein is Probable potassium transport system protein Kup.